The following is a 671-amino-acid chain: DNA ligase (671 aa).

Residues Asp-34–Asp-38, Ser-83–Leu-84, and Glu-117 contribute to the NAD(+) site. Catalysis depends on Lys-119, which acts as the N6-AMP-lysine intermediate. Arg-140, Glu-177, Lys-293, and Lys-317 together coordinate NAD(+). Zn(2+)-binding residues include Cys-411, Cys-414, Cys-429, and Cys-434. One can recognise a BRCT domain in the interval Lys-591–Gln-671.

Belongs to the NAD-dependent DNA ligase family. LigA subfamily. Requires Mg(2+) as cofactor. Mn(2+) serves as cofactor.

The catalysed reaction is NAD(+) + (deoxyribonucleotide)n-3'-hydroxyl + 5'-phospho-(deoxyribonucleotide)m = (deoxyribonucleotide)n+m + AMP + beta-nicotinamide D-nucleotide.. DNA ligase that catalyzes the formation of phosphodiester linkages between 5'-phosphoryl and 3'-hydroxyl groups in double-stranded DNA using NAD as a coenzyme and as the energy source for the reaction. It is essential for DNA replication and repair of damaged DNA. The sequence is that of DNA ligase from Geobacter metallireducens (strain ATCC 53774 / DSM 7210 / GS-15).